Reading from the N-terminus, the 205-residue chain is LexA repressor (205 aa).

A DNA-binding region (H-T-H motif) is located at residues 29–49 (IRDICKATGLRSSSTVYNYLN). Active-site for autocatalytic cleavage activity residues include Ser128 and Lys165.

The protein belongs to the peptidase S24 family. Homodimer.

The enzyme catalyses Hydrolysis of Ala-|-Gly bond in repressor LexA.. Functionally, represses a number of genes involved in the response to DNA damage (SOS response), including recA and lexA. In the presence of single-stranded DNA, RecA interacts with LexA causing an autocatalytic cleavage which disrupts the DNA-binding part of LexA, leading to derepression of the SOS regulon and eventually DNA repair. The protein is LexA repressor of Moorella thermoacetica (strain ATCC 39073 / JCM 9320).